A 366-amino-acid polypeptide reads, in one-letter code: MKNRILLINLGGPRDTSEIEKFLIDLFEDPLVFDLPLPEWIRKPLGKWVAKKRAPKVAQTYKSMGFGGGSPLVSETSKQANAIAKALEKITGEKWEGNITMTCGYPDIRKLNRDFLVPTKQNILLPLYPHFSRSTVLSTAKLVEQTTKFCPVSYEGWVAPFHSSQVYLESIRDLILDFFQNRLNRKDFLHSDSFQGVSNWETIDLIFSAHGIPIRLIEKGDRYREEINSNVENLKRLLYEKGFRGKCHTSFQSRVGPSKWTEPNTITMLEQLGKNGVKRVAVYPISFVSDHLETLEEIGEQLKKIAYNNGIAEYHRIPAPGIYPKFIEAMAKIGLESIQSSKNECICKKLGGHFPNLKSGECPINF.

Fe cation is bound by residues histidine 210 and glutamate 293.

It belongs to the ferrochelatase family.

The protein localises to the cytoplasm. It catalyses the reaction heme b + 2 H(+) = protoporphyrin IX + Fe(2+). The protein operates within porphyrin-containing compound metabolism; protoheme biosynthesis; protoheme from protoporphyrin-IX: step 1/1. In terms of biological role, catalyzes the ferrous insertion into protoporphyrin IX. In Leptospira borgpetersenii serovar Hardjo-bovis (strain L550), this protein is Ferrochelatase.